The following is a 139-amino-acid chain: Natriuretic peptide Mc-NP (139 aa).

The N-terminal stretch at 1–25 (MVGLSRLRGGGLLLVLALLPLALDG) is a signal peptide. The propeptide occupies 26-75 (KPLEEAPTAPSRIIPFSRPVRKQSQAVLDPMVHPERPAGSGDDGDSRRLE). Residues 45–72 (VRKQSQAVLDPMVHPERPAGSGDDGDSR) form a disordered region. Residues Cys86 and Cys102 are joined by a disulfide bond. Residues 117–139 (IIPFSRPVRKESRAALDRMQQPG) constitute a propeptide that is removed on maturation.

Belongs to the natriuretic peptide family. In terms of tissue distribution, expressed by the venom gland.

Its subcellular location is the secreted. Functionally, snake venom natriuretic peptide that dose-dependently induces the rapid relaxation of rat aortic strips phenylephrine-precontracted. Acts by stimulating cGMP production in a dose-dependent manner (by probably activating NPR1 and/or NPR2). May also show potent hypotensive effects. A synthetic peptide (AA 77-108, where the Cys-95 is replaced by a Ser) increases sodium excretion and urinary volume in rat kidneys. The protein is Natriuretic peptide Mc-NP of Micrurus corallinus (Brazilian coral snake).